Reading from the N-terminus, the 77-residue chain is Acyl carrier protein (77 aa).

In terms of domain architecture, Carrier spans 2 to 77 (SDVAKRVKEI…DAIDYITEHT (76 aa)). The residue at position 37 (S37) is an O-(pantetheine 4'-phosphoryl)serine.

This sequence belongs to the acyl carrier protein (ACP) family. Post-translationally, 4'-phosphopantetheine is transferred from CoA to a specific serine of apo-ACP by AcpS. This modification is essential for activity because fatty acids are bound in thioester linkage to the sulfhydryl of the prosthetic group.

The protein localises to the cytoplasm. It functions in the pathway lipid metabolism; fatty acid biosynthesis. Functionally, carrier of the growing fatty acid chain in fatty acid biosynthesis. The polypeptide is Acyl carrier protein (Trichlorobacter lovleyi (strain ATCC BAA-1151 / DSM 17278 / SZ) (Geobacter lovleyi)).